A 370-amino-acid polypeptide reads, in one-letter code: MAFTLEDIVQRFGGEVVGDGSQRVGSLAPLDQAGPDQLAFLANPKYLAQVETTRAGAVLINADDLAKLASRENRNFIVTPNPYAYFARVAQTFIDLAAPKAAPGVHPSATIDPSAQIAASAVIGPHVTVEAGAVIGDNVRLDANVVIGRGTRIGAGSHLYPNVAVYHGCKLAERVIVHAGAVIGSDGFGFAPDFVGEGEARTGSWVKIPQVGGVSIAADVEIGANTTIDRGAMADTIIEECVKIDNLVQIGHNCKVGAYTVIAGCAGIAGSTTIGRHCMIGGAVGIAGHVTLADYVIVTAKSGVSKSLLKPGMYTSAFPAVNHADWNKSAALLRNIDKLRDRIKTLENAAAEKRDGPAPNAASKATGDKV.

Catalysis depends on H252, which acts as the Proton acceptor. The interval 348 to 370 (NAAAEKRDGPAPNAASKATGDKV) is disordered.

The protein belongs to the transferase hexapeptide repeat family. LpxD subfamily. In terms of assembly, homotrimer.

It catalyses the reaction a UDP-3-O-[(3R)-3-hydroxyacyl]-alpha-D-glucosamine + a (3R)-hydroxyacyl-[ACP] = a UDP-2-N,3-O-bis[(3R)-3-hydroxyacyl]-alpha-D-glucosamine + holo-[ACP] + H(+). Its pathway is bacterial outer membrane biogenesis; LPS lipid A biosynthesis. In terms of biological role, catalyzes the N-acylation of UDP-3-O-acylglucosamine using 3-hydroxyacyl-ACP as the acyl donor. Is involved in the biosynthesis of lipid A, a phosphorylated glycolipid that anchors the lipopolysaccharide to the outer membrane of the cell. The chain is UDP-3-O-acylglucosamine N-acyltransferase from Paraburkholderia phytofirmans (strain DSM 17436 / LMG 22146 / PsJN) (Burkholderia phytofirmans).